Consider the following 258-residue polypeptide: UPF0246 protein CJA_0191 (258 aa).

It belongs to the UPF0246 family.

This is UPF0246 protein CJA_0191 from Cellvibrio japonicus (strain Ueda107) (Pseudomonas fluorescens subsp. cellulosa).